We begin with the raw amino-acid sequence, 1027 residues long: Abnormal embryogenesis protein 30 (1027 aa).

WD repeat units lie at residues 18 to 65 (RTPF…IQAV) and 70 to 109 (KLDSSVSALHFSPDGRFLAAATSKGIIHLLDVETGKVRFS). 2 disordered regions span residues 619-655 (NDSSPFLEEDEGEPEQEEQKPDEEPEPEGEPQPACDL) and 1005-1027 (AMDSGRDLTDNGESDEDEEDDDI). 2 stretches are compositionally biased toward acidic residues: residues 625–647 (LEEDEGEPEQEEQKPDEEPEPEG) and 1014–1027 (DNGESDEDEEDDDI).

It belongs to the APC4 family. The APC/C is probably composed of at least 12 subunits: apc-2, apc-10, apc-11, cdc-26, emb-1, emb-27, emb-30, mat-1, mat-2, mat-3, such-1 and gfi-3.

Its pathway is protein modification; protein ubiquitination. Functionally, probable component of the anaphase promoting complex/cyclosome (APC/C), a cell cycle-regulated E3 ubiquitin ligase that controls progression through mitosis and the G1 phase of the cell cycle. The APC/C complex acts by mediating ubiquitination and subsequent degradation of target proteins. Developmental role in early embryogenesis and the metaphase to anaphase transition in oocyte and spermatocyte meiosis and mitosis in somatic and germ cells. Required for embryonic anterior-posterior axis formation. Negatively regulates ify-1 protein levels during meiosis I. Plays a role in regulating the abundance of glr-1 receptors in postmitotic neurons, which may in turn control animal locomotion. Involved in regulating GABA neurotransmitter release at neuromuscular junctions in GABA motor neurons. The sequence is that of Abnormal embryogenesis protein 30 from Caenorhabditis elegans.